Reading from the N-terminus, the 226-residue chain is PKHD-type hydroxylase PiuC (226 aa).

In terms of domain architecture, Fe2OG dioxygenase spans 78-178 (KVFPPLFNCY…RYASFFWTQS (101 aa)). Residues His96, Asp98, and His159 each coordinate Fe cation. 2-oxoglutarate is bound at residue Arg169.

It depends on Fe(2+) as a cofactor. L-ascorbate is required as a cofactor.

This Pseudomonas aeruginosa (strain ATCC 15692 / DSM 22644 / CIP 104116 / JCM 14847 / LMG 12228 / 1C / PRS 101 / PAO1) protein is PKHD-type hydroxylase PiuC (piuC).